We begin with the raw amino-acid sequence, 257 residues long: Small ribosomal subunit protein uS2 (257 aa).

Belongs to the universal ribosomal protein uS2 family.

This is Small ribosomal subunit protein uS2 from Bartonella henselae (strain ATCC 49882 / DSM 28221 / CCUG 30454 / Houston 1) (Rochalimaea henselae).